The following is a 177-amino-acid chain: Large ribosomal subunit protein uL6 (177 aa).

The protein belongs to the universal ribosomal protein uL6 family. Part of the 50S ribosomal subunit.

Its function is as follows. This protein binds to the 23S rRNA, and is important in its secondary structure. It is located near the subunit interface in the base of the L7/L12 stalk, and near the tRNA binding site of the peptidyltransferase center. This is Large ribosomal subunit protein uL6 from Chromobacterium violaceum (strain ATCC 12472 / DSM 30191 / JCM 1249 / CCUG 213 / NBRC 12614 / NCIMB 9131 / NCTC 9757 / MK).